The chain runs to 117 residues: Large ribosomal subunit protein uL23 (117 aa).

The protein belongs to the universal ribosomal protein uL23 family. In terms of assembly, part of the 50S ribosomal subunit. Contacts protein L29, and trigger factor when it is bound to the ribosome.

Functionally, one of the early assembly proteins it binds 23S rRNA. One of the proteins that surrounds the polypeptide exit tunnel on the outside of the ribosome. Forms the main docking site for trigger factor binding to the ribosome. The sequence is that of Large ribosomal subunit protein uL23 from Ruminiclostridium cellulolyticum (strain ATCC 35319 / DSM 5812 / JCM 6584 / H10) (Clostridium cellulolyticum).